The following is a 462-amino-acid chain: Ammonium transporter Rh type B (462 aa).

Residues 1-11 (MTDPSTNMRLK) are Cytoplasmic-facing. A helical membrane pass occupies residues 12-32 (LPITCFILQIILIILFGVLVQ). The Extracellular portion of the chain corresponds to 33–62 (YDEDTDAKKHHHGNHSESKSDIENDFYYRY). An N-linked (GlcNAc...) asparagine glycan is attached at N46. A helical membrane pass occupies residues 63–83 (PSFQDVHVMIFVGFGFLMTFL). Over 84–94 (QRYGFSSVGFN) the chain is Cytoplasmic. A helical transmembrane segment spans residues 95–115 (FLIAAFSLQWATLMQGFFHGL). Topologically, residues 116–125 (HEGKIHIGVE) are extracellular. Residues 126-146 (SMINADFCTGSVLISFGAVLG) form a helical membrane-spanning segment. Residues 147 to 152 (KTSPVQ) lie on the Cytoplasmic side of the membrane. A helical transmembrane segment spans residues 153–173 (LLFMAVFEVTLFAVNEFILLT). Topologically, residues 174–180 (LLGTKDA) are extracellular. The chain crosses the membrane as a helical span at residues 181–201 (GGSMTIHTFGAYFGLMVTRIL). At 202–220 (YRPNLDKSKHKNCSVYHSD) the chain is on the cytoplasmic side. Residues 221–241 (LFAMIGTLYLWMFWPSFNSAV) traverse the membrane as a helical segment. The Extracellular segment spans residues 242 to 302 (TEHGDPQHRT…VAAGTAGEMM (61 aa)). A helical transmembrane segment spans residues 303–323 (LTPFGSMIVGFLAGIISVLGF). The Cytoplasmic segment spans residues 324–344 (KYLTPILENKLKIQDTCGIHN). A helical transmembrane segment spans residues 345 to 365 (LHGMPGVLGAIVGAVTASLAS). Residues 366–395 (KEVYGEGLEKVFPDVASGKRTASDQGGVQA) are Extracellular-facing. The chain crosses the membrane as a helical span at residues 396–416 (ISLAVTLGMALFGGLIVGFIL). Over 417-462 (KLPIFGAPRDTTCFEDSLYWEVPGEEESHEDQLTTVKTEESDKLNS) the chain is Cytoplasmic. The interval 441 to 462 (EEESHEDQLTTVKTEESDKLNS) is disordered. Residues 453-462 (KTEESDKLNS) are compositionally biased toward basic and acidic residues.

The protein belongs to the ammonium transporter (TC 2.A.49) family. Rh subfamily.

The protein resides in the basolateral cell membrane. It localises to the cytoplasmic vesicle membrane. In terms of biological role, functions as an ammonia transporter. May play a role in the elimination of ammonia in the gill. The polypeptide is Ammonium transporter Rh type B (rhbg) (Oryzias latipes (Japanese rice fish)).